The following is a 417-amino-acid chain: Serine hydroxymethyltransferase (417 aa).

Residues Leu-121 and 125–127 contribute to the (6S)-5,6,7,8-tetrahydrofolate site; that span reads GHL. The residue at position 230 (Lys-230) is an N6-(pyridoxal phosphate)lysine. (6S)-5,6,7,8-tetrahydrofolate is bound at residue 355–357; sequence SPF.

It belongs to the SHMT family. Homodimer. The cofactor is pyridoxal 5'-phosphate.

The protein resides in the cytoplasm. The catalysed reaction is (6R)-5,10-methylene-5,6,7,8-tetrahydrofolate + glycine + H2O = (6S)-5,6,7,8-tetrahydrofolate + L-serine. Its pathway is one-carbon metabolism; tetrahydrofolate interconversion. The protein operates within amino-acid biosynthesis; glycine biosynthesis; glycine from L-serine: step 1/1. In terms of biological role, catalyzes the reversible interconversion of serine and glycine with tetrahydrofolate (THF) serving as the one-carbon carrier. This reaction serves as the major source of one-carbon groups required for the biosynthesis of purines, thymidylate, methionine, and other important biomolecules. Also exhibits THF-independent aldolase activity toward beta-hydroxyamino acids, producing glycine and aldehydes, via a retro-aldol mechanism. The chain is Serine hydroxymethyltransferase from Nitrosococcus oceani (strain ATCC 19707 / BCRC 17464 / JCM 30415 / NCIMB 11848 / C-107).